A 350-amino-acid chain; its full sequence is UDP-N-acetylenolpyruvoylglucosamine reductase (350 aa).

An FAD-binding PCMH-type domain is found at His-24–Leu-195. Arg-172 is a catalytic residue. Ser-245 functions as the Proton donor in the catalytic mechanism. Glu-342 is an active-site residue.

It belongs to the MurB family. It depends on FAD as a cofactor.

The protein resides in the cytoplasm. The enzyme catalyses UDP-N-acetyl-alpha-D-muramate + NADP(+) = UDP-N-acetyl-3-O-(1-carboxyvinyl)-alpha-D-glucosamine + NADPH + H(+). Its pathway is cell wall biogenesis; peptidoglycan biosynthesis. Cell wall formation. The polypeptide is UDP-N-acetylenolpyruvoylglucosamine reductase (Xanthomonas axonopodis pv. citri (strain 306)).